A 105-amino-acid chain; its full sequence is 3-phenylpropionate/cinnamic acid dioxygenase ferredoxin subunit (105 aa).

The 96-residue stretch at 4–99 folds into the Rieske domain; that stretch reads LFVCTVEELP…VVVKDGNIYI (96 aa). 4 residues coordinate [2Fe-2S] cluster: Cys42, His44, Cys62, and His65.

This sequence belongs to the bacterial ring-hydroxylating dioxygenase ferredoxin component family. This dioxygenase system consists of four proteins: the two subunits of the hydroxylase component (HcaE and HcaF), a ferredoxin (HcaC) and a ferredoxin reductase (HcaD). The cofactor is [2Fe-2S] cluster.

It participates in aromatic compound metabolism; 3-phenylpropanoate degradation. Part of the multicomponent 3-phenylpropionate dioxygenase, that converts 3-phenylpropionic acid (PP) and cinnamic acid (CI) into 3-phenylpropionate-dihydrodiol (PP-dihydrodiol) and cinnamic acid-dihydrodiol (CI-dihydrodiol), respectively. This protein seems to be a 2Fe-2S ferredoxin. The polypeptide is 3-phenylpropionate/cinnamic acid dioxygenase ferredoxin subunit (Photorhabdus laumondii subsp. laumondii (strain DSM 15139 / CIP 105565 / TT01) (Photorhabdus luminescens subsp. laumondii)).